Reading from the N-terminus, the 73-residue chain is MKYRLYSEGLSISNDLNSIIGQQSTMDTDIEIDEDDIMELLNILTELGCDVDFDENFSDIADDILESLIEQDV.

This sequence belongs to the orthopoxvirus OPG058 family.

In Vaccinia virus (strain Copenhagen) (VACV), this protein is Protein OPG058 (OPG058).